Reading from the N-terminus, the 197-residue chain is Histocompatibility antigen 60c (197 aa).

A signal peptide spans 1-17 (MALLLLILESCSAGTYA). N-linked (GlcNAc...) asparagine glycosylation is found at Asn51, Asn81, and Asn114. Residue Ser177 is the site of GPI-anchor amidated serine attachment. A propeptide spans 178 to 197 (MACKSSPFDGLIMILLIYIL) (removed in mature form).

This sequence belongs to the NKG2D ligand family. Expressed in skin, and weakly in large intestine.

It is found in the cell membrane. Ligand for the KLRK1 immunosurveillance receptor. Binding to KLRK1 stimulates cell lysis in vitro. In Mus musculus (Mouse), this protein is Histocompatibility antigen 60c.